A 258-amino-acid chain; its full sequence is Ribosomal RNA small subunit methyltransferase A (258 aa).

S-adenosyl-L-methionine contacts are provided by Asn-12, Leu-14, Gly-38, Glu-59, Asp-83, and Asn-100.

The protein belongs to the class I-like SAM-binding methyltransferase superfamily. rRNA adenine N(6)-methyltransferase family. RsmA subfamily.

Its subcellular location is the cytoplasm. The catalysed reaction is adenosine(1518)/adenosine(1519) in 16S rRNA + 4 S-adenosyl-L-methionine = N(6)-dimethyladenosine(1518)/N(6)-dimethyladenosine(1519) in 16S rRNA + 4 S-adenosyl-L-homocysteine + 4 H(+). Its function is as follows. Specifically dimethylates two adjacent adenosines (A1518 and A1519) in the loop of a conserved hairpin near the 3'-end of 16S rRNA in the 30S particle. May play a critical role in biogenesis of 30S subunits. The chain is Ribosomal RNA small subunit methyltransferase A from Metamycoplasma arthritidis (strain 158L3-1) (Mycoplasma arthritidis).